The sequence spans 142 residues: Large ribosomal subunit protein uL11 (142 aa).

This sequence belongs to the universal ribosomal protein uL11 family. In terms of assembly, part of the ribosomal stalk of the 50S ribosomal subunit. Interacts with L10 and the large rRNA to form the base of the stalk. L10 forms an elongated spine to which L12 dimers bind in a sequential fashion forming a multimeric L10(L12)X complex. One or more lysine residues are methylated.

Forms part of the ribosomal stalk which helps the ribosome interact with GTP-bound translation factors. The chain is Large ribosomal subunit protein uL11 from Klebsiella pneumoniae (strain 342).